The following is a 1077-amino-acid chain: Zinc finger protein 518B (1077 aa).

Residues 9 to 30 (YTTQVNGGPSSLTMSPKQPNRA) are compositionally biased toward polar residues. The disordered stretch occupies residues 9 to 35 (YTTQVNGGPSSLTMSPKQPNRATRTER). 2 C2H2-type zinc fingers span residues 160-182 (FICS…LVKH) and 188-211 (YRCE…RRVH). The tract at residues 372 to 397 (TSRGDGGTSECLSTEKGSGGQKKMLS) is disordered. Residue Lys479 forms a Glycyl lysine isopeptide (Lys-Gly) (interchain with G-Cter in SUMO2) linkage. Disordered stretches follow at residues 561-585 (LVSS…GQVS), 599-622 (GEDK…ETAG), 675-739 (KPSS…GSRQ), and 825-852 (QPLT…RKED). Residues 564–574 (SDRKLEDKQME) are compositionally biased toward basic and acidic residues. Polar residues-rich tracts occupy residues 605-621 (SQQP…SETA) and 675-688 (KPSS…QRRS). Glycyl lysine isopeptide (Lys-Gly) (interchain with G-Cter in SUMO2) cross-links involve residues Lys847 and Lys861. Positions 895–914 (QVNSTKKKNKMQANPGRYFK) are disordered. A C2H2-type 3 zinc finger spans residues 1039–1061 (FKCWFCGRLYEDQEEWMSHGQRH).

The protein belongs to the krueppel C2H2-type zinc-finger protein family.

The protein localises to the nucleus. Through its association with the EHMT1-EHMT2/G9A and PRC2/EED-EZH2 histone methyltransferase complexes may function in gene silencing, regulating repressive post-translational methylation of histone tails at promoters of target genes. The protein is Zinc finger protein 518B (Znf518b) of Mus musculus (Mouse).